An 832-amino-acid polypeptide reads, in one-letter code: Sodium/hydrogen exchanger 3 (832 aa).

The N-terminal stretch at 1-29 is a signal peptide; sequence MGRNRSGCVARCVSLTALVLLLCCPVVRS. Topologically, residues 30-66 are extracellular; it reads SEAETDPDSHTEHGDSHGGSREGNDTGFQIVTFRWEH. Residues 31–51 are disordered; it reads EAETDPDSHTEHGDSHGGSRE. The segment covering 36–51 has biased composition (basic and acidic residues); that stretch reads PDSHTEHGDSHGGSRE. Residues 67–89 traverse the membrane as a helical segment; sequence VQTPYVIALWILVASLGKIVFHL. Topologically, residues 90–97 are cytoplasmic; it reads SEKVTSVV. Residues 98 to 117 traverse the membrane as a helical segment; that stretch reads PESALLIVLGLILGGIVWAA. Residues 118–126 lie on the Extracellular side of the membrane; sequence DHSASFTLT. Residues 127–144 traverse the membrane as a helical segment; the sequence is PTVFFFYLLPPIVLDAGY. The Cytoplasmic segment spans residues 145 to 147; sequence FMP. A helical transmembrane segment spans residues 148 to 183; sequence NRHFFGNLGTILTYAVIGTVWNAATTGLSLYGVFLL. A 1,2-diacyl-sn-glycero-3-phospho-(1D-myo-inositol) contacts are provided by glycine 153, glycine 156, and threonine 157. Residues 184–196 lie on the Extracellular side of the membrane; the sequence is GLMGDLKAGLLEF. A helical transmembrane segment spans residues 197–218; the sequence is LLFGSLIAAVDPVAVLAVFEEV. Over 219-220 the chain is Cytoplasmic; the sequence is HV. The chain crosses the membrane as a helical span at residues 221-252; the sequence is NEVLFIIVFGESLLNDAVTVVLYNVFNSFVEV. Residues 253–259 are Extracellular-facing; the sequence is GAGNVQG. The helical transmembrane segment at 260–294 threads the bilayer; sequence LDYFKGIVSFFVVSLGGTAVGIIFAFILSLVTRFT. Topologically, residues 295-296 are cytoplasmic; sequence KH. Residues 297-319 traverse the membrane as a helical segment; it reads VRVIEPGFVFVISYLSYLTADML. Residues 320–321 lie on the Extracellular side of the membrane; the sequence is SL. A helical membrane pass occupies residues 322–338; that stretch reads SAILAITFCGICCQKYV. Residues 339–345 are Cytoplasmic-facing; the sequence is KANLCEQ. The helical transmembrane segment at 346–374 threads the bilayer; that stretch reads SITTVRYAMKMLASGAETIIFMFLGISAV. Residues 375–382 lie on the Extracellular side of the membrane; that stretch reads NPTIWTWN. A helical transmembrane segment spans residues 383 to 404; it reads TAFILLTLVFISVYRVIGVVIQ. Residues 405-417 lie on the Cytoplasmic side of the membrane; the sequence is TWILNHYRVVQLE. Residues 418–441 traverse the membrane as a helical segment; that stretch reads IIDQVVMSYGGLRGAVAFALVVLL. At 442–448 the chain is on the extracellular side; that stretch reads DSNYVGE. The helical transmembrane segment at 449–482 threads the bilayer; sequence RRLFVSTTIIVVYFTVIFQGLTIKPLVKWLKVKR. Residues 483-832 are Cytoplasmic-facing; the sequence is SQHKEPLLNE…PLSFLPESSM (350 aa). A 1,2-diacyl-sn-glycero-3-phospho-(1D-myo-inositol)-binding residues include glutamine 512, isoleucine 513, and histidine 515. Positions 740-760 are disordered; that stretch reads TPASNDADETGTGIDNPSFSN.

This sequence belongs to the monovalent cation:proton antiporter 1 (CPA1) transporter (TC 2.A.36) family. In terms of assembly, homodimer. As to expression, detected in early distal renal tubules in the kidney bundle zone, in proximal and late distal tubules in the kidney sinus zone, in absorptive epithelial cells of the intestine and in rectal epithelium (at protein level). Isoform 1 is expressed strongly in the gills, at intermediate levels in the kidney, spleen, rectum, spiral intestine and skin, and weakly in the brain, blood and rectal gland. Isoform 2 is expressed strongly in the kidney, rectum and spiral intestine, and weakly in muscles and the rectal gland.

Its subcellular location is the apical cell membrane. It localises to the cell membrane. The protein localises to the recycling endosome membrane. The protein resides in the early endosome membrane. The catalysed reaction is Na(+)(in) + H(+)(out) = Na(+)(out) + H(+)(in). Its activity is regulated as follows. Seems to switch between active and inactive modes in response to various stimuli. Activated directly or indirectly by membrane phosphatidylinositol (PIs). Regulated by a variety of auxiliary proteins, which facilitate the maturation, cell surface expression and function of the transporter. Inhibited specifically by the drug tenapanor. Its function is as follows. Plasma membrane Na(+)/H(+) antiporter. Exchanges intracellular H(+) ions for extracellular Na(+) in 1:1 stoichiometry, playing a key role in salt and fluid absorption and pH homeostasis. Major apical Na(+)/H(+) exchanger in kidney and intestine playing an important role in renal and intestine Na(+) absorption and blood pressure regulation. This is Sodium/hydrogen exchanger 3 from Triakis scyllium (Banded houndshark).